The sequence spans 565 residues: Sulfite reductase [NADPH] hemoprotein beta-component (565 aa).

4 residues coordinate [4Fe-4S] cluster: C429, C435, C474, and C478. C478 serves as a coordination point for siroheme.

It belongs to the nitrite and sulfite reductase 4Fe-4S domain family. As to quaternary structure, alpha(8)-beta(8). The alpha component is a flavoprotein, the beta component is a hemoprotein. Siroheme is required as a cofactor. Requires [4Fe-4S] cluster as cofactor.

The enzyme catalyses hydrogen sulfide + 3 NADP(+) + 3 H2O = sulfite + 3 NADPH + 4 H(+). It participates in sulfur metabolism; hydrogen sulfide biosynthesis; hydrogen sulfide from sulfite (NADPH route): step 1/1. Its function is as follows. Component of the sulfite reductase complex that catalyzes the 6-electron reduction of sulfite to sulfide. This is one of several activities required for the biosynthesis of L-cysteine from sulfate. The protein is Sulfite reductase [NADPH] hemoprotein beta-component of Shewanella sp. (strain MR-4).